Consider the following 321-residue polypeptide: MIYHLISKSCQRLNKPNLINNLIKSQKQSIIYSSSSSSGSSKFISNKYFTTTSNSNNNSNNTTTTTTTTLRQDEIDFFNQQSSDWWNPEGTMKPLHRMNPFRVKYICDRLKIYNEKVSKNPIHLPLEGLNVIDVGCGVGLLTESLSRLGASKVVGLDAAKNNILMAISHASFDQKLNENIQNKSLNYLESTIENFYNIENDQQFDAVCSLEVIEHVDNPKQFIDYLSKIVKPGGSIFISTINKTFLSYISAILGAEYIFRMVPVGTHHWDQFIKPKDLESYFDSNNCQITDLKGLVYNPLTCEWDFTNDLNVNYLLHAIKK.

4 residues coordinate S-adenosyl-L-methionine: R102, G135, D157, and L210. Positions 211, 214, and 215 each coordinate Mg(2+).

The protein belongs to the class I-like SAM-binding methyltransferase superfamily. UbiG/COQ3 family. Component of a multi-subunit COQ enzyme complex. Mg(2+) is required as a cofactor.

Its subcellular location is the mitochondrion inner membrane. The catalysed reaction is a 3,4-dihydroxy-5-(all-trans-polyprenyl)benzoate + S-adenosyl-L-methionine = a 4-hydroxy-3-methoxy-5-(all-trans-polyprenyl)benzoate + S-adenosyl-L-homocysteine + H(+). It catalyses the reaction a 3-demethylubiquinone + S-adenosyl-L-methionine = a ubiquinone + S-adenosyl-L-homocysteine. The enzyme catalyses a 3-demethylubiquinol + S-adenosyl-L-methionine = a ubiquinol + S-adenosyl-L-homocysteine + H(+). The protein operates within cofactor biosynthesis; ubiquinone biosynthesis. Functionally, O-methyltransferase required for two non-consecutive steps during ubiquinone biosynthesis. Catalyzes the 2 O-methylation of 3,4-dihydroxy-5-(all-trans-polyprenyl)benzoic acid into 4-hydroxy-3-methoxy-5-(all-trans-polyprenyl)benzoic acid. Also catalyzes the last step of ubiquinone biosynthesis by mediating methylation of 3-demethylubiquinone into ubiquinone. Also able to mediate the methylation of 3-demethylubiquinol into ubiquinol. The sequence is that of Ubiquinone biosynthesis O-methyltransferase, mitochondrial from Dictyostelium discoideum (Social amoeba).